The following is a 1752-amino-acid chain: DNA-directed RNA polymerase II subunit rpb1 (1752 aa).

Cysteine 69, cysteine 72, cysteine 79, histidine 82, cysteine 109, cysteine 112, cysteine 150, and cysteine 175 together coordinate Zn(2+). Residues aspartate 487, aspartate 489, and aspartate 491 each coordinate Mg(2+). A bridging helix region spans residues 816–828 (PQEFFFHAMAGRE). Lysine 1252 participates in a covalent cross-link: Glycyl lysine isopeptide (Lys-Gly) (interchain with G-Cter in ubiquitin). Serine 1489, serine 1499, serine 1506, and serine 1529 each carry phosphoserine. The residue at position 1531 (tyrosine 1531) is a Phosphotyrosine. Residues 1554–1752 (TSPSYSPSSP…SPSYSPTSPS (199 aa)) form a disordered region. Tandem repeats lie at residues 1558–1564 (YSPSSPG), 1578–1584 (YSPTSPS), 1585–1591 (YSPTSPS), 1592–1598 (YSPTSPS), and 1599–1605 (YSPTSPS). The interval 1558–1752 (YSPSSPGYST…SPSYSPTSPS (195 aa)) is C-terminal domain (CTD); 26 X 7 AA approximate tandem repeats of Y-S-P-[TS]-S-P-S. The stretch at 1606-1612 (YSATSPS) is one 6; approximate repeat. 20 tandem repeats follow at residues 1613-1619 (YSPTSPS), 1620-1626 (YSPTSPS), 1627-1633 (YSPTSPS), 1634-1640 (YSPTSPS), 1641-1647 (YSPTSPS), 1648-1654 (YSPTSPS), 1655-1661 (YSPTSPS), 1662-1668 (YSPTSPS), 1669-1675 (YSPTSPS), 1676-1682 (YSPTSPS), 1683-1689 (YSPTSPS), 1690-1696 (YSPTSPS), 1697-1703 (YSPTSPS), 1704-1710 (YSPTSPS), 1711-1717 (YSPTSPS), 1718-1724 (YSPTSPS), 1725-1731 (YSPTSPS), 1732-1738 (YSPTSPS), 1739-1745 (YSPTSPS), and 1746-1752 (YSPTSPS).

This sequence belongs to the RNA polymerase beta' chain family. In terms of assembly, component of the RNA polymerase II (Pol II) complex consisting of 12 subunits. Post-translationally, the tandem 7 residues repeats in the C-terminal domain (CTD) can be highly phosphorylated. The phosphorylation activates Pol II. Phosphorylation occurs mainly at residues 'Ser-2' and 'Ser-5' of the heptapeptide repeat. The phosphorylation state is believed to result from the balanced action of site-specific CTD kinases and phosphatase, and a 'CTD code' that specifies the position of Pol II within the transcription cycle has been proposed. Following transcription stress, the elongating form of RNA polymerase II (RNA pol IIo) is polyubiquitinated via 'Lys-63'-linkages on Lys-1252 at DNA damage sites without leading to degradation: ubiquitination promotes RNA pol IIo backtracking to allow access by the transcription-coupled nucleotide excision repair (TC-NER) machinery. Subsequent def1-dependent polyubiquitination by the elongin complex via 'Lys-48'-linkages may lead to proteasome-mediated degradation; presumably at stalled RNA pol II where TC-NER has failed, to halt global transcription and enable 'last resort' DNA repair pathways.

The protein resides in the nucleus. It catalyses the reaction RNA(n) + a ribonucleoside 5'-triphosphate = RNA(n+1) + diphosphate. DNA-dependent RNA polymerase catalyzes the transcription of DNA into RNA using the four ribonucleoside triphosphates as substrates. Largest and catalytic component of RNA polymerase II which synthesizes mRNA precursors and many functional non-coding RNAs. Forms the polymerase active center together with the second largest subunit. Pol II is the central component of the basal RNA polymerase II transcription machinery. It is composed of mobile elements that move relative to each other. RPB1 is part of the core element with the central large cleft, the clamp element that moves to open and close the cleft and the jaws that are thought to grab the incoming DNA template. At the start of transcription, a single-stranded DNA template strand of the promoter is positioned within the central active site cleft of Pol II. A bridging helix emanates from RPB1 and crosses the cleft near the catalytic site and is thought to promote translocation of Pol II by acting as a ratchet that moves the RNA-DNA hybrid through the active site by switching from straight to bent conformations at each step of nucleotide addition. During transcription elongation, Pol II moves on the template as the transcript elongates. Elongation is influenced by the phosphorylation status of the C-terminal domain (CTD) of Pol II largest subunit (RPB1), which serves as a platform for assembly of factors that regulate transcription initiation, elongation, termination and mRNA processing. In Schizosaccharomyces pombe (strain 972 / ATCC 24843) (Fission yeast), this protein is DNA-directed RNA polymerase II subunit rpb1 (rpb1).